The sequence spans 511 residues: MYTPHPFGFLIILVPMTNAMRAIAAIAAGVGSVAATVATSTTSSISSSTTIINTSSATTIGGNHTSGSTGFSTNSTLLDADHLPLQLTTAKVDLDIEIDIQLLTNGYDGTTLTSFYNESSWTNASEMDTIVGEEPEPLSLVSIVVVGIFLSVLIFLSVAGNILVCLAIYTERSLRRIGNLFLASLAIADLFVASLVMTFAGVNDLLGYWIFGAQFCDTWVAFDVMCSTASILNLCAISMDRYIHIKDPLRYGRWVTRRVAVITIAAIWLLAAFVSFVPISLGIHRPDQPLIFEDNGKKYPTCALDLTPTYAVVSSCISFYFPCVVMIGIYCRLYCYAQKHVKSIKAVTRPGEVAEKQRYKSIRRPKNQPKKFKVRNLHTHSSPYHVSDHKAAVTVGVIMGVFLICWVPFFCVNITAAFCKTCIGGQTFKILTWLGYSNSAFNPIIYSIFNKEFRDAFKRILTMRNPWCCAQDVGNIHPRNSDRFITDYAAKNVVVMNSGRSSAELEQVSAI.

Residues 1–19 (MYTPHPFGFLIILVPMTNA) form the signal peptide. Residues 20 to 142 (MRAIAAIAAG…EEPEPLSLVS (123 aa)) are Extracellular-facing. Asn53, Asn63, Asn74, Asn117, and Asn123 each carry an N-linked (GlcNAc...) asparagine glycan. A helical membrane pass occupies residues 143–169 (IVVVGIFLSVLIFLSVAGNILVCLAIY). The Cytoplasmic portion of the chain corresponds to 170–179 (TERSLRRIGN). Residues 180–206 (LFLASLAIADLFVASLVMTFAGVNDLL) traverse the membrane as a helical segment. Topologically, residues 207–216 (GYWIFGAQFC) are extracellular. Cys216 and Cys302 are disulfide-bonded. Residues 217 to 239 (DTWVAFDVMCSTASILNLCAISM) traverse the membrane as a helical segment. Residues 240–258 (DRYIHIKDPLRYGRWVTRR) lie on the Cytoplasmic side of the membrane. The chain crosses the membrane as a helical span at residues 259–279 (VAVITIAAIWLLAAFVSFVPI). Over 280–310 (SLGIHRPDQPLIFEDNGKKYPTCALDLTPTY) the chain is Extracellular. Residues 311 to 331 (AVVSSCISFYFPCVVMIGIYC) form a helical membrane-spanning segment. The Cytoplasmic portion of the chain corresponds to 332-391 (RLYCYAQKHVKSIKAVTRPGEVAEKQRYKSIRRPKNQPKKFKVRNLHTHSSPYHVSDHKA). Residues 392–412 (AVTVGVIMGVFLICWVPFFCV) form a helical membrane-spanning segment. The Extracellular portion of the chain corresponds to 413-427 (NITAAFCKTCIGGQT). The helical transmembrane segment at 428–450 (FKILTWLGYSNSAFNPIIYSIFN) threads the bilayer. Topologically, residues 451 to 511 (KEFRDAFKRI…SAELEQVSAI (61 aa)) are cytoplasmic. Residues Cys468 and Cys469 are each lipidated (S-palmitoyl cysteine).

It belongs to the G-protein coupled receptor 1 family. As to expression, expressed in the larval and adult CNS in structures that mediate higher-order brain functions such as learning, memory and motor control: in the mushroom body neuropil and four unpaired neurons in each thoracic segment. The adult CNS has intense expression in the central complex, moderate expression in several neurosecretory cells, and weak expression in two unpaired neurons in the mesothoracic neuromere. Also seen in the somata of the optic lobes.

Its subcellular location is the cell membrane. Its function is as follows. Receptor for dopamine. The activity of this receptor is mediated by G proteins which activate adenylyl cyclase. Might be involved in the processing of visual information and/or visual learning. Important for Pavlovian conditioning: required in the mushroom body as a receptor conveying unconditional stimuli information, has a role in memory formation for aversive and appetitive learning. Sleep-deprivation-induced impairments in learning can be partially explained through alterations in dopamine signaling, Dop1R1 expression levels are reduced; sleep may have a role in restoring dopamine homeostasis. This Drosophila melanogaster (Fruit fly) protein is Dopamine receptor 1 (Dop1R1).